We begin with the raw amino-acid sequence, 467 residues long: MSIFSLLPELWLLGLVCALFVASISDKKQSVASWLPMAAGLGVLAALFALGERGEFLYAAYKLDGLSQFFKLLIAFGFAVVTGIAAGNKEGKDLTPDYFMLLALSAWGLMLLASCVELITLYLALELSSYSLYALIPLRGQDRRAAEAGIKYILFGAAVTALALFGLSYIIAAKHTTYLSGLAATSWSFADAPMAVIGLTLFLAGFFYKLALFPFHFWCPDVYQGAKNETAAYVATIPKLGAVVVLVRLAAFVAPHLEVTTILAILGAVSMTAGNLAALVQRDLKRLLGFSSVAHAGYVMLGLAAGSAAGMSAAAFYSLAYILMNLAAFYVVCAIAKNDENPSLDDLDGLYKRAPALAMILAVAAFSLVGLPPTAGFAGKLFLLSAAWDQGYHWLVIVAVLNTAISIYYYLSMVRHAYTGESDAPAIVWPRGYLIFGGALAVLVLLLGILPAPLYDLAAQAAGQLHP.

13 helical membrane passes run 1-21 (MSIF…ALFV), 31-51 (VASW…FALG), 66-86 (LSQF…GIAA), 99-119 (FMLL…VELI), 153-173 (ILFG…IIAA), 195-215 (AVIG…LFPF), 231-253 (AAYV…AAFV), 258-280 (EVTT…AALV), 287-307 (LLGF…AAGS), 315-335 (AFYS…VCAI), 357-377 (LAMI…TAGF), 394-414 (WLVI…LSMV), and 434-454 (LIFG…PAPL).

Belongs to the complex I subunit 2 family. In terms of assembly, NDH-1 is composed of 14 different subunits. Subunits NuoA, H, J, K, L, M, N constitute the membrane sector of the complex.

The protein resides in the cell inner membrane. It carries out the reaction a quinone + NADH + 5 H(+)(in) = a quinol + NAD(+) + 4 H(+)(out). NDH-1 shuttles electrons from NADH, via FMN and iron-sulfur (Fe-S) centers, to quinones in the respiratory chain. The immediate electron acceptor for the enzyme in this species is believed to be ubiquinone. Couples the redox reaction to proton translocation (for every two electrons transferred, four hydrogen ions are translocated across the cytoplasmic membrane), and thus conserves the redox energy in a proton gradient. This is NADH-quinone oxidoreductase subunit N 2 from Solidesulfovibrio magneticus (strain ATCC 700980 / DSM 13731 / RS-1) (Desulfovibrio magneticus).